The primary structure comprises 197 residues: Imidazoleglycerol-phosphate dehydratase (197 aa).

It belongs to the imidazoleglycerol-phosphate dehydratase family.

The protein resides in the cytoplasm. It catalyses the reaction D-erythro-1-(imidazol-4-yl)glycerol 3-phosphate = 3-(imidazol-4-yl)-2-oxopropyl phosphate + H2O. Its pathway is amino-acid biosynthesis; L-histidine biosynthesis; L-histidine from 5-phospho-alpha-D-ribose 1-diphosphate: step 6/9. The protein is Imidazoleglycerol-phosphate dehydratase of Halorhodospira halophila (strain DSM 244 / SL1) (Ectothiorhodospira halophila (strain DSM 244 / SL1)).